The primary structure comprises 102 residues: Small ribosomal subunit protein uS10 (102 aa).

The protein belongs to the universal ribosomal protein uS10 family. As to quaternary structure, part of the 30S ribosomal subunit.

Its function is as follows. Involved in the binding of tRNA to the ribosomes. This chain is Small ribosomal subunit protein uS10, found in Mycoplasma mycoides subsp. mycoides SC (strain CCUG 32753 / NCTC 10114 / PG1).